The chain runs to 411 residues: LL-diaminopimelate aminotransferase (411 aa).

Residues Tyr15 and Gly42 each coordinate substrate. Residues Tyr72, 108 to 109, Tyr132, Asn187, Tyr218, and 246 to 248 contribute to the pyridoxal 5'-phosphate site; these read AK and SFS. Lys109, Tyr132, and Asn187 together coordinate substrate. At Lys249 the chain carries N6-(pyridoxal phosphate)lysine. 2 residues coordinate pyridoxal 5'-phosphate: Arg257 and Asn292. Substrate is bound by residues Asn292 and Arg388.

The protein belongs to the class-I pyridoxal-phosphate-dependent aminotransferase family. LL-diaminopimelate aminotransferase subfamily. In terms of assembly, homodimer. Pyridoxal 5'-phosphate is required as a cofactor.

It carries out the reaction (2S,6S)-2,6-diaminopimelate + 2-oxoglutarate = (S)-2,3,4,5-tetrahydrodipicolinate + L-glutamate + H2O + H(+). Its pathway is amino-acid biosynthesis; L-lysine biosynthesis via DAP pathway; LL-2,6-diaminopimelate from (S)-tetrahydrodipicolinate (aminotransferase route): step 1/1. Involved in the synthesis of meso-diaminopimelate (m-DAP or DL-DAP), required for both lysine and peptidoglycan biosynthesis. Catalyzes the direct conversion of tetrahydrodipicolinate to LL-diaminopimelate. The chain is LL-diaminopimelate aminotransferase from Crocosphaera subtropica (strain ATCC 51142 / BH68) (Cyanothece sp. (strain ATCC 51142)).